Consider the following 88-residue polypeptide: Small ribosomal subunit protein uS17 (88 aa).

The protein belongs to the universal ribosomal protein uS17 family. Part of the 30S ribosomal subunit.

Its function is as follows. One of the primary rRNA binding proteins, it binds specifically to the 5'-end of 16S ribosomal RNA. The polypeptide is Small ribosomal subunit protein uS17 (Azotobacter vinelandii (strain DJ / ATCC BAA-1303)).